The chain runs to 153 residues: MAVESRVTQEEIKKEPEKPIDREKTCPLLLRVFTTNNGRHHRMDEFSRGNVPSSELQIYTWMDATLKELTSLVKEVYPEARKKGTHFNFAIVFTDVKRPGYRVKEIGSTMSGRKGTDDSMTLQSQKFQIGDYLDIAITPPNRAPPPSGRMRPY.

Residues 1–20 form a disordered region; that stretch reads MAVESRVTQEEIKKEPEKPI. An N-acetylalanine modification is found at Ala-2. The segment covering 7–20 has biased composition (basic and acidic residues); it reads VTQEEIKKEPEKPI. Residue Lys-13 forms a Glycyl lysine isopeptide (Lys-Gly) (interchain with G-Cter in SUMO2) linkage. Residues 93-153 are involved in splicing regulation activity; the sequence is FTDVKRPGYR…PPPSGRMRPY (61 aa).

It belongs to the SAP18 family. As to quaternary structure, found in a mRNA splicing-dependent exon junction complex (EJC). Component of the heterotrimeric ASAP (apoptosis- and splicing-associated protein) and PSAP complexes consisting of RNPS1, SAP18 and either ACIN1 or PNN, respectively; the ASAP and PSAP complexes probably are formed mutually exclusive. For the ASAP complex, the association of SAP18 seems to require a preformed RNPS1:ACIN1 complex. Forms a complex with SIN3A and HDAC1. Interacts with SUFU. In terms of tissue distribution, ubiquitous.

The protein localises to the nucleus. It is found in the cytoplasm. It localises to the nucleus speckle. Its function is as follows. Component of the SIN3-repressing complex. Enhances the ability of SIN3-HDAC1-mediated transcriptional repression. When tethered to the promoter, it can direct the formation of a repressive complex to core histone proteins. Auxiliary component of the splicing-dependent multiprotein exon junction complex (EJC) deposited at splice junction on mRNAs. The EJC is a dynamic structure consisting of core proteins and several peripheral nuclear and cytoplasmic associated factors that join the complex only transiently either during EJC assembly or during subsequent mRNA metabolism. Component of the ASAP and PSAP complexes which bind RNA in a sequence-independent manner and are proposed to be recruited to the EJC prior to or during the splicing process and to regulate specific excision of introns in specific transcription subsets. The ASAP complex can inhibit mRNA processing during in vitro splicing reactions. The ASAP complex promotes apoptosis and is disassembled after induction of apoptosis. Involved in the splicing modulation of BCL2L1/Bcl-X (and probably other apoptotic genes); specifically inhibits the formation of proapoptotic isoforms such as Bcl-X(S); the activity is different from the established EJC assembly and function. The polypeptide is Histone deacetylase complex subunit SAP18 (SAP18) (Homo sapiens (Human)).